The following is a 458-amino-acid chain: Sphingoid long chain base kinase 4 (458 aa).

The 139-residue stretch at 103–241 (KRSRRFIVFI…FDLMTFEQKG (139 aa)) folds into the DAGKc domain. ATP is bound by residues 113–115 (NPH) and T145. 170–173 (GGDG) contributes to the substrate binding site. The active-site Proton donor/acceptor is the D172. ATP contacts are provided by residues E177, 202–204 (GSG), R266, R272, and 426–428 (DGE).

The protein localises to the cell membrane. Its subcellular location is the endoplasmic reticulum membrane. It localises to the late endosome membrane. It is found in the golgi apparatus membrane. The enzyme catalyses a sphingoid base + ATP = a sphingoid 1-phosphate + ADP + H(+). Functionally, catalyzes the phosphorylation of the sphingoid long chain bases dihydrosphingosine (DHS) and phytosphingosine (PHS) to form dihydrosphingosine 1-phosphate (DHS-1P) and phytosphingosine 1-phosphate (PHS-1P) respectively. Involved in the biosynthesis of sphingolipids and ceramides. Involved in heat-induced transient cell cycle arrest. Accumulation of phosphorylated sphingoid long chain bases (LCBPs) stimulates calcium influx and activates calcineurin signaling. Involved in heat-stress resistance. In Schizosaccharomyces pombe (strain 972 / ATCC 24843) (Fission yeast), this protein is Sphingoid long chain base kinase 4 (lcb4).